Reading from the N-terminus, the 362-residue chain is Peptide chain release factor 1 (362 aa).

The residue at position 237 (glutamine 237) is an N5-methylglutamine.

Belongs to the prokaryotic/mitochondrial release factor family. Post-translationally, methylated by PrmC. Methylation increases the termination efficiency of RF1.

It localises to the cytoplasm. In terms of biological role, peptide chain release factor 1 directs the termination of translation in response to the peptide chain termination codons UAG and UAA. The sequence is that of Peptide chain release factor 1 from Vibrio atlanticus (strain LGP32) (Vibrio splendidus (strain Mel32)).